Here is a 102-residue protein sequence, read N- to C-terminus: Small ribosomal subunit protein uS10 (102 aa).

Belongs to the universal ribosomal protein uS10 family. As to quaternary structure, part of the 30S ribosomal subunit.

In terms of biological role, involved in the binding of tRNA to the ribosomes. This Thermosipho melanesiensis (strain DSM 12029 / CIP 104789 / BI429) protein is Small ribosomal subunit protein uS10.